Here is a 190-residue protein sequence, read N- to C-terminus: T-cell receptor gamma chain C region 5/10-13 (190 aa).

The interval 1-157 is c region; that stretch reads DKRTDSDFSP…LQVTTTYAFY (157 aa). The chain crosses the membrane as a helical span at residues 158–178; the sequence is TYLILFFKSMVHLAFVVFCLF. Over 179-190 the chain is Cytoplasmic; the sequence is RRAAMSCDDQRS.

It localises to the membrane. The chain is T-cell receptor gamma chain C region 5/10-13 from Mus musculus (Mouse).